The chain runs to 224 residues: Deoxyribose-phosphate aldolase (224 aa).

Asp-92 acts as the Proton donor/acceptor in catalysis. Lys-155 (schiff-base intermediate with acetaldehyde) is an active-site residue. Residue Lys-184 is the Proton donor/acceptor of the active site.

It belongs to the DeoC/FbaB aldolase family. DeoC type 1 subfamily.

The protein localises to the cytoplasm. The enzyme catalyses 2-deoxy-D-ribose 5-phosphate = D-glyceraldehyde 3-phosphate + acetaldehyde. Its pathway is carbohydrate degradation; 2-deoxy-D-ribose 1-phosphate degradation; D-glyceraldehyde 3-phosphate and acetaldehyde from 2-deoxy-alpha-D-ribose 1-phosphate: step 2/2. In terms of biological role, catalyzes a reversible aldol reaction between acetaldehyde and D-glyceraldehyde 3-phosphate to generate 2-deoxy-D-ribose 5-phosphate. This Clostridium perfringens (strain ATCC 13124 / DSM 756 / JCM 1290 / NCIMB 6125 / NCTC 8237 / Type A) protein is Deoxyribose-phosphate aldolase.